Consider the following 89-residue polypeptide: Small ribosomal subunit protein bS20 (89 aa).

Disordered regions lie at residues 1–25 (MANI…ASMK) and 69–89 (KNAA…IQAS). Positions 7–20 (AIKRAKTSEKRRAH) are enriched in basic residues.

The protein belongs to the bacterial ribosomal protein bS20 family.

Binds directly to 16S ribosomal RNA. This is Small ribosomal subunit protein bS20 from Geobacillus kaustophilus (strain HTA426).